Here is a 520-residue protein sequence, read N- to C-terminus: Cryptochrome DASH (520 aa).

The Photolyase/cryptochrome alpha/beta domain occupies 5-141; the sequence is RTVICLLRND…RVQTFWGSTL (137 aa). The disordered stretch occupies residues 479–504; it reads SRHVNNKSSGPSSSKGRKGSSYTARQ.

It belongs to the DNA photolyase class-1 family. The cofactor is FAD. (6R)-5,10-methylene-5,6,7,8-tetrahydrofolate is required as a cofactor.

Its function is as follows. May have a photoreceptor function. Has weak cyclobutyl pyrimidine photolyase activity when expressed in E.coli and when tested in vitro. This Danio rerio (Zebrafish) protein is Cryptochrome DASH (cry-dash).